Reading from the N-terminus, the 256-residue chain is Probable ABC transporter ATP-binding protein spyM18_0273 (256 aa).

Residues 4-246 (LEINNLHVSI…EKEGYAGIAQ (243 aa)) form the ABC transporter domain. 36 to 43 (GPNGTGKS) contacts ATP.

This sequence belongs to the ABC transporter superfamily. Ycf16 family.

The protein resides in the cell membrane. In Streptococcus pyogenes serotype M18 (strain MGAS8232), this protein is Probable ABC transporter ATP-binding protein spyM18_0273.